The following is a 481-amino-acid chain: Glycogen synthase (481 aa).

Residue lysine 16 participates in ADP-alpha-D-glucose binding.

This sequence belongs to the glycosyltransferase 1 family. Bacterial/plant glycogen synthase subfamily.

It catalyses the reaction [(1-&gt;4)-alpha-D-glucosyl](n) + ADP-alpha-D-glucose = [(1-&gt;4)-alpha-D-glucosyl](n+1) + ADP + H(+). Its pathway is glycan biosynthesis; glycogen biosynthesis. Functionally, synthesizes alpha-1,4-glucan chains using ADP-glucose. The sequence is that of Glycogen synthase from Lacticaseibacillus casei (strain BL23) (Lactobacillus casei).